We begin with the raw amino-acid sequence, 100 residues long: Urease subunit gamma (100 aa).

This sequence belongs to the urease gamma subunit family. In terms of assembly, heterotrimer of UreA (gamma), UreB (beta) and UreC (alpha) subunits. Three heterotrimers associate to form the active enzyme.

The protein resides in the cytoplasm. The enzyme catalyses urea + 2 H2O + H(+) = hydrogencarbonate + 2 NH4(+). The protein operates within nitrogen metabolism; urea degradation; CO(2) and NH(3) from urea (urease route): step 1/1. The protein is Urease subunit gamma of Picosynechococcus sp. (strain ATCC 27264 / PCC 7002 / PR-6) (Agmenellum quadruplicatum).